The following is a 356-amino-acid chain: Dynein axonemal heavy chain 12 (356 aa).

ANK repeat units lie at residues Asp-17 to Val-46, Ser-50 to Arg-81, Ser-82 to Phe-111, His-124 to Gln-153, Asp-154 to Tyr-183, and Cys-185 to Leu-218. In terms of domain architecture, SOCS box spans Trp-290–Asp-345.

The protein belongs to the dynein heavy chain family. In terms of assembly, consists of at least two heavy chains and a number of intermediate and light chains.

The protein resides in the cytoplasm. It is found in the cytoskeleton. It localises to the cilium axoneme. It functions in the pathway protein modification; protein ubiquitination. In terms of biological role, force generating protein of respiratory cilia. Produces force towards the minus ends of microtubules. Dynein has ATPase activity; the force-producing power stroke is thought to occur on release of ADP. Involved in sperm motility; implicated in sperm flagellar assembly. Its function is as follows. May be a substrate-recognition component of a SCF-like ECS (Elongin-Cullin-SOCS-box protein) E3 ubiquitin-protein ligase complex which mediates the ubiquitination and subsequent proteasomal degradation of target proteins. The protein is Dynein axonemal heavy chain 12 (DNAH12) of Bos taurus (Bovine).